The chain runs to 586 residues: NADH-quinone oxidoreductase subunit C/D 2 (586 aa).

An NADH dehydrogenase I subunit C region spans residues 1–173 (MKWVNKGTVE…RTDPPSHDFE (173 aa)). The segment at 197–586 (AELVLNWGPL…LDPVVGETDR (390 aa)) is NADH dehydrogenase I subunit D.

It in the N-terminal section; belongs to the complex I 30 kDa subunit family. This sequence in the C-terminal section; belongs to the complex I 49 kDa subunit family. NDH-1 is composed of 13 different subunits. Subunits NuoB, CD, E, F, and G constitute the peripheral sector of the complex.

The protein resides in the cell inner membrane. It catalyses the reaction a quinone + NADH + 5 H(+)(in) = a quinol + NAD(+) + 4 H(+)(out). Its function is as follows. NDH-1 shuttles electrons from NADH, via FMN and iron-sulfur (Fe-S) centers, to quinones in the respiratory chain. The immediate electron acceptor for the enzyme in this species is believed to be ubiquinone. Couples the redox reaction to proton translocation (for every two electrons transferred, four hydrogen ions are translocated across the cytoplasmic membrane), and thus conserves the redox energy in a proton gradient. The polypeptide is NADH-quinone oxidoreductase subunit C/D 2 (nuoC2) (Aquifex aeolicus (strain VF5)).